The chain runs to 669 residues: Methionine--tRNA ligase (669 aa).

The 'HIGH' region signature appears at 15-25; that stretch reads PYANGPAHIGH. 4 residues coordinate Zn(2+): Cys-146, Cys-149, Cys-158, and Cys-162. Residues 328 to 332 carry the 'KMSKS' region motif; the sequence is KFSKS. Lys-331 contributes to the ATP binding site. One can recognise a tRNA-binding domain in the interval 570–669; that stretch reads QFKALDLRVG…KEVPAGCGIR (100 aa).

The protein belongs to the class-I aminoacyl-tRNA synthetase family. MetG type 1 subfamily. Homodimer. Zn(2+) serves as cofactor.

The protein resides in the cytoplasm. It carries out the reaction tRNA(Met) + L-methionine + ATP = L-methionyl-tRNA(Met) + AMP + diphosphate. Is required not only for elongation of protein synthesis but also for the initiation of all mRNA translation through initiator tRNA(fMet) aminoacylation. The polypeptide is Methionine--tRNA ligase (Methanothrix thermoacetophila (strain DSM 6194 / JCM 14653 / NBRC 101360 / PT) (Methanosaeta thermophila)).